The following is a 169-amino-acid chain: Endoribonuclease YbeY (169 aa).

H126, H130, and H136 together coordinate Zn(2+).

The protein belongs to the endoribonuclease YbeY family. Requires Zn(2+) as cofactor.

The protein localises to the cytoplasm. In terms of biological role, single strand-specific metallo-endoribonuclease involved in late-stage 70S ribosome quality control and in maturation of the 3' terminus of the 16S rRNA. This Bradyrhizobium sp. (strain BTAi1 / ATCC BAA-1182) protein is Endoribonuclease YbeY.